The following is a 492-amino-acid chain: Differentially expressed in FDCP 8 homolog (492 aa).

The span at 38–51 (GLGGSGSTGSGSEA) shows a compositional bias: gly residues. Positions 38-62 (GLGGSGSTGSGSEAGGSEESGPQGA) are disordered. 2 consecutive Phorbol-ester/DAG-type zinc fingers follow at residues 161–214 (PHHG…KRVC) and 400–453 (DHIR…NMIC). The interval 468 to 492 (RMKSTEDDDDDDDGVATDDDVTAAE) is disordered. Positions 473 to 492 (EDDDDDDDGVATDDDVTAAE) are enriched in acidic residues.

Belongs to the DEF8 family.

This is Differentially expressed in FDCP 8 homolog from Drosophila melanogaster (Fruit fly).